The sequence spans 314 residues: Caspase-like protein (314 aa).

Belongs to the peptidase C14A family.

May be involved in viral replication. This Heliothis virescens ascovirus 3e (HvAV-3e) protein is Caspase-like protein.